Here is a 238-residue protein sequence, read N- to C-terminus: DNA damage-regulated autophagy modulator protein 1 (238 aa).

Transmembrane regions (helical) follow at residues 9–29, 53–73, 91–111, 116–136, 161–181, and 200–220; these read AFVP…SYVV, SGIF…TMYT, VFNL…GIVA, LAVP…GVVY, MVIS…ASLI, and VSAI…LTFI.

This sequence belongs to the DRAM/TMEM150 family.

Its subcellular location is the lysosome membrane. Functionally, lysosomal modulator of autophagy that plays a central role in p53/TP53-mediated apoptosis. Not involved in p73/TP73-mediated autophagy. The polypeptide is DNA damage-regulated autophagy modulator protein 1 (DRAM1) (Homo sapiens (Human)).